The primary structure comprises 484 residues: uncharacterized protein (484 aa).

This is an uncharacterized protein from Orgyia pseudotsugata multicapsid polyhedrosis virus (OpMNPV).